Consider the following 653-residue polypeptide: Rab proteins geranylgeranyltransferase component A 1 (653 aa).

The disordered stretch occupies residues 606–653; it reads PPPPNPEDIILDGDSLQPEASESSAIPEANSETFKESTNLGNLEESSE. A compositionally biased stretch (polar residues) spans 623 to 646; that stretch reads PEASESSAIPEANSETFKESTNLG.

Belongs to the Rab GDI family. In terms of assembly, monomer. Heterotrimer composed of RABGGTA, RABGGTB and CHM; within this trimer, RABGGTA and RABGGTB form the catalytic component B, while CHM (component A) mediates Rab protein binding. Can associate with the Rab GGTase dimer (RGGT or component B) prior to Rab protein binding; the association is stabilized by geranylgeranyl pyrophosphate (GGpp). The CHM:RGGT:Rab complex is destabilized by GGpp. Interacts with RAB1A, RAB1B, RAB5A, RAB7A and RAB27A and mediates their prenylation. Interacts with the non-phosphorylated forms of RAB3A, RAB3B, RAB3C, RAB3D, RAB5B, RAB5C, RAB8A, RAB8B, RAB10, RAB12, RAB35, and RAB43.

The protein resides in the cytoplasm. It localises to the cytosol. Substrate-binding subunit of the Rab geranylgeranyltransferase (GGTase) complex. Binds unprenylated Rab proteins and presents the substrate peptide to the catalytic component B composed of RABGGTA and RABGGTB, and remains bound to it after the geranylgeranyl transfer reaction. The component A is thought to be regenerated by transferring its prenylated Rab back to the donor membrane. Besides, a pre-formed complex consisting of CHM and the Rab GGTase dimer (RGGT or component B) can bind to and prenylate Rab proteins; this alternative pathway is proposed to be the predominant pathway for Rab protein geranylgeranylation. The protein is Rab proteins geranylgeranyltransferase component A 1 (CHM) of Homo sapiens (Human).